The sequence spans 126 residues: Holo-[acyl-carrier-protein] synthase (126 aa).

The Mg(2+) site is built by Asp-9 and Glu-58.

Belongs to the P-Pant transferase superfamily. AcpS family. It depends on Mg(2+) as a cofactor.

Its subcellular location is the cytoplasm. The enzyme catalyses apo-[ACP] + CoA = holo-[ACP] + adenosine 3',5'-bisphosphate + H(+). In terms of biological role, transfers the 4'-phosphopantetheine moiety from coenzyme A to a Ser of acyl-carrier-protein. This is Holo-[acyl-carrier-protein] synthase from Escherichia coli (strain ATCC 8739 / DSM 1576 / NBRC 3972 / NCIMB 8545 / WDCM 00012 / Crooks).